Here is a 376-residue protein sequence, read N- to C-terminus: Actin (376 aa).

Belongs to the actin family.

Its subcellular location is the cytoplasm. The protein resides in the cytoskeleton. It catalyses the reaction ATP + H2O = ADP + phosphate + H(+). Its function is as follows. Actins are highly conserved proteins that are involved in various types of cell motility and are ubiquitously expressed in all eukaryotic cells. This chain is Actin, found in Trypanosoma cruzi.